A 414-amino-acid chain; its full sequence is Alanine--glyoxylate aminotransferase (414 aa).

The transit peptide at 1-23 (MFRMLAKASVTLGSRAASWVRNM) directs the protein to the mitochondrion. Residue lysine 231 is modified to N6-(pyridoxal phosphate)lysine. Position 247 is an N6-acetyllysine; alternate (lysine 247). The residue at position 247 (lysine 247) is an N6-succinyllysine; alternate. Lysine 256 and lysine 334 each carry N6-acetyllysine. Arginine 382 provides a ligand contact to substrate. Residues 412 to 414 (NKL) carry the Microbody targeting signal motif.

This sequence belongs to the class-V pyridoxal-phosphate-dependent aminotransferase family. In terms of assembly, homodimer. Pyridoxal 5'-phosphate is required as a cofactor.

The protein localises to the peroxisome. It localises to the mitochondrion matrix. It catalyses the reaction L-serine + pyruvate = 3-hydroxypyruvate + L-alanine. The enzyme catalyses glyoxylate + L-alanine = glycine + pyruvate. In terms of biological role, catalyzes the transamination of glyoxylate to glycine and contributes to the glyoxylate detoxification. Catalyzes the transamination between L-serine and pyruvate and weakly contributes to gluconeogenesis from the L-serine metabolism. This chain is Alanine--glyoxylate aminotransferase, found in Rattus norvegicus (Rat).